A 502-amino-acid polypeptide reads, in one-letter code: Probable glycine dehydrogenase (decarboxylating) subunit 2 (502 aa).

At Lys-273 the chain carries N6-(pyridoxal phosphate)lysine.

This sequence belongs to the GcvP family. C-terminal subunit subfamily. As to quaternary structure, the glycine cleavage system is composed of four proteins: P, T, L and H. In this organism, the P 'protein' is a heterodimer of two subunits. It depends on pyridoxal 5'-phosphate as a cofactor.

The catalysed reaction is N(6)-[(R)-lipoyl]-L-lysyl-[glycine-cleavage complex H protein] + glycine + H(+) = N(6)-[(R)-S(8)-aminomethyldihydrolipoyl]-L-lysyl-[glycine-cleavage complex H protein] + CO2. In terms of biological role, the glycine cleavage system catalyzes the degradation of glycine. The P protein binds the alpha-amino group of glycine through its pyridoxal phosphate cofactor; CO(2) is released and the remaining methylamine moiety is then transferred to the lipoamide cofactor of the H protein. This is Probable glycine dehydrogenase (decarboxylating) subunit 2 from Staphylococcus epidermidis (strain ATCC 35984 / DSM 28319 / BCRC 17069 / CCUG 31568 / BM 3577 / RP62A).